The primary structure comprises 311 residues: Acetyl-coenzyme A carboxylase carboxyl transferase subunit alpha (311 aa).

The region spanning 36-286 (NLSKEISKVY…ANYFISELAE (251 aa)) is the CoA carboxyltransferase C-terminal domain.

It belongs to the AccA family. As to quaternary structure, acetyl-CoA carboxylase is a heterohexamer composed of biotin carboxyl carrier protein (AccB), biotin carboxylase (AccC) and two subunits each of ACCase subunit alpha (AccA) and ACCase subunit beta (AccD).

Its subcellular location is the cytoplasm. The catalysed reaction is N(6)-carboxybiotinyl-L-lysyl-[protein] + acetyl-CoA = N(6)-biotinyl-L-lysyl-[protein] + malonyl-CoA. It participates in lipid metabolism; malonyl-CoA biosynthesis; malonyl-CoA from acetyl-CoA: step 1/1. Component of the acetyl coenzyme A carboxylase (ACC) complex. First, biotin carboxylase catalyzes the carboxylation of biotin on its carrier protein (BCCP) and then the CO(2) group is transferred by the carboxyltransferase to acetyl-CoA to form malonyl-CoA. This is Acetyl-coenzyme A carboxylase carboxyl transferase subunit alpha from Campylobacter concisus (strain 13826).